A 383-amino-acid polypeptide reads, in one-letter code: Chorismate synthase (383 aa).

Residues Arg39 and Arg45 each contribute to the NADP(+) site. Residues 127–129, 249–250, Gly294, 309–313, and Arg335 contribute to the FMN site; these read RAS, QS, and KPIPT.

Belongs to the chorismate synthase family. As to quaternary structure, homotetramer. The cofactor is FMNH2.

The enzyme catalyses 5-O-(1-carboxyvinyl)-3-phosphoshikimate = chorismate + phosphate. It functions in the pathway metabolic intermediate biosynthesis; chorismate biosynthesis; chorismate from D-erythrose 4-phosphate and phosphoenolpyruvate: step 7/7. Catalyzes the anti-1,4-elimination of the C-3 phosphate and the C-6 proR hydrogen from 5-enolpyruvylshikimate-3-phosphate (EPSP) to yield chorismate, which is the branch point compound that serves as the starting substrate for the three terminal pathways of aromatic amino acid biosynthesis. This reaction introduces a second double bond into the aromatic ring system. The polypeptide is Chorismate synthase (Caldicellulosiruptor bescii (strain ATCC BAA-1888 / DSM 6725 / KCTC 15123 / Z-1320) (Anaerocellum thermophilum)).